Consider the following 148-residue polypeptide: Oleosin 16 kDa (148 aa).

Residues 1-21 are disordered; that stretch reads MADQHRGVIGGGGYGDRGGQE. Position 2 is an N-acetylalanine (Ala2). The polar stretch occupies residues 2 to 34; that stretch reads ADQHRGVIGGGGYGDRGGQEQQEKQPFMMTALK. Gly residues predominate over residues 8–17; sequence VIGGGGYGDR. The segment at 35–106 is hydrophobic; the sequence is TVTAATAGGS…AALSVFSWMY (72 aa). The next 3 helical transmembrane spans lie at 43 to 63, 66 to 86, and 87 to 107; these read GSML…LTVA, VLVI…LMAA, and GFVT…WMYK.

It belongs to the oleosin family.

The protein resides in the lipid droplet. It localises to the membrane. May have a structural role to stabilize the lipid body during desiccation of the seed by preventing coalescence of the oil. Probably interacts with both lipid and phospholipid moieties of lipid bodies. May also provide recognition signals for specific lipase anchorage in lipolysis during seedling growth. This is Oleosin 16 kDa (OLE16) from Oryza sativa subsp. japonica (Rice).